A 345-amino-acid polypeptide reads, in one-letter code: Protein GAMETE CELL DEFECTIVE 1, mitochondrial (345 aa).

A mitochondrion-targeting transit peptide spans 1 to 43 (MLALRKTLLHGRLPAAPPAAAAAAIASRIPALLRRLSSSPGDG). The segment at 36 to 82 (LSSSPGDGQGGDEWGSSWSTGITKEHFDGSDAAVGRPVTSPSKPVSP) is disordered.

It localises to the mitochondrion. Functionally, essential for fertility (male and female gametophyte functions and development). Required for the integrity of female gametic mitochondria. Involved in embryo apical-basal patterning, and particularly dorsal-ventral patterning, during early embryogenesis, and endosperm free nucleus positioning and development as well as early endosperm development, probably by modulating the expression pattern of related genes (e.g. AL1, MYB3/AL2, CYP78A13/GE, PNH1, HAZ1, MPK6 and OSH1). Has function in triggering of endosperm programmed cell death (PCD) leading to syncytial endosperm cellularization and starchy endosperm cell maturation. Implicated in central vacuole dynamics necessary for microspore development leading to pollen production, and for pollen development and germination. The polypeptide is Protein GAMETE CELL DEFECTIVE 1, mitochondrial (Oryza sativa subsp. indica (Rice)).